The chain runs to 294 residues: Mating type protein mtA-1 (294 aa).

A DNA-binding region (alpha box) is located at residues 46 to 101 (TAKKKVNGFMGFRSNYSPLFSYLPQKMRSPFMTILWQYDPYHNEWDFMCSVYSSIR).

Belongs to the MATALPHA1 family.

Its subcellular location is the nucleus. In terms of biological role, mating type proteins are sequence specific DNA-binding proteins that act as master switches in fungal differentiation by controlling gene expression in a cell type-specific fashion. Transcriptional activator that induces the transcription of alpha-specific genes. The sequence is that of Mating type protein mtA-1 (MTA1) from Sordaria equina.